A 213-amino-acid polypeptide reads, in one-letter code: Peroxisomal protein 2 (213 aa).

Positions 211–213 (ETL) match the Peroxisomal target signal 1 (PTS1) motif.

It belongs to the PXP2 family.

It is found in the peroxisome matrix. The protein resides in the cytoplasm. It localises to the cytosol. Its subcellular location is the nucleus. In terms of biological role, probably involved in peroxisome formation or maintenance as well as in amino acid metabolism. The protein is Peroxisomal protein 2 of Schizosaccharomyces pombe (strain 972 / ATCC 24843) (Fission yeast).